A 442-amino-acid polypeptide reads, in one-letter code: Cell cycle checkpoint control protein RAD9B (442 aa).

2 disordered regions span residues 370-392 and 422-442; these read EVPE…TEDV and QSLA…FSTF. Ser-387 carries the phosphoserine modification.

Belongs to the rad9 family. Interacts with HUS1, HUS1B, RAD1, RAD9A and RAD17.

The chain is Cell cycle checkpoint control protein RAD9B (RAD9B) from Bos taurus (Bovine).